The chain runs to 603 residues: Protein US26 (603 aa).

Acidic residues predominate over residues 496 to 513 (EEEDQEEDDTSDDDDQEK). 2 disordered regions span residues 496–536 (EEED…GSLE) and 549–568 (AVAEQDRKKTQKKHKIDTAQ). Residues 517–533 (NPQNNIGSLTRTPSSPG) show a composition bias toward polar residues.

The protein belongs to the herpesviridae US22 family.

This is Protein US26 (US26) from Human cytomegalovirus (strain Merlin) (HHV-5).